The sequence spans 230 residues: uncharacterized protein (230 aa).

A signal peptide spans 1-21; it reads MARYDARLRGIGKAHACSAFA. The disordered stretch occupies residues 47–190; the sequence is SASVQENFIA…TVQTSSSGDP (144 aa). Residues 141 to 150 show a composition bias toward polar residues; sequence PQSQTSANSQ. Residues 151–165 are compositionally biased toward basic and acidic residues; the sequence is KKPEIRCRERSKNAR. Residues 173 to 188 show a composition bias toward polar residues; sequence AVATNEAETVQTSSSG.

To R.meliloti RA0936 and y4aO.

This is an uncharacterized protein from Sinorhizobium fredii (strain NBRC 101917 / NGR234).